The following is a 93-amino-acid chain: Phosphoribosyl-ATP pyrophosphatase (93 aa).

The protein belongs to the PRA-PH family.

The protein localises to the cytoplasm. It carries out the reaction 1-(5-phospho-beta-D-ribosyl)-ATP + H2O = 1-(5-phospho-beta-D-ribosyl)-5'-AMP + diphosphate + H(+). Its pathway is amino-acid biosynthesis; L-histidine biosynthesis; L-histidine from 5-phospho-alpha-D-ribose 1-diphosphate: step 2/9. This Mycobacterium leprae (strain Br4923) protein is Phosphoribosyl-ATP pyrophosphatase.